Reading from the N-terminus, the 1147-residue chain is SR-related and CTD-associated factor 4 (1147 aa).

Residues 1–139 (MDAVNAFNQE…PLLDMAAGTS (139 aa)) form the CID domain. Lysine 49 is subject to N6-acetyllysine. Disordered stretches follow at residues 145-179 (AENV…AVPQ), 235-254 (KTTP…PEQK), 269-331 (DEPE…QQPA), and 424-502 (VKRH…KPET). Serine 154 is modified (phosphoserine). Composition is skewed to low complexity over residues 283–292 (TAVTTTAPAA) and 299–310 (TATVPAAAAPAA). Over residues 424 to 433 (VKRHMSDNRK) the composition is skewed to basic and acidic residues. Residues 434 to 475 (SRSRSASRSPKRRRSRSGSRSRRSRHRRSRSRSRDRRRHSPR) are compositionally biased toward basic residues. A compositionally biased stretch (basic and acidic residues) spans 477-492 (RSQERRDREKERERRQ). Positions 508-582 (TTLWVGQLDK…KSIKIAWALN (75 aa)) constitute an RRM domain. Disordered stretches follow at residues 629 to 661 (DWKG…IPKP) and 879 to 1147 (RPMP…EAPR). Serine 656 carries the post-translational modification Phosphoserine. Residues 879–913 (RPMPPHMMHRGPPPGPGGFAMPPPHGMKGPFPPHG) are compositionally biased toward pro residues. Residues 941–965 (QQPPQQPQQQPQPQAPQQPQQQQQQ) are compositionally biased toward low complexity. Over residues 966 to 977 (QPPPSQQPPPTQ) the composition is skewed to pro residues. A Phosphoserine modification is found at serine 1004. Over residues 1009-1085 (VENDRERYGN…RGKEKPEVTD (77 aa)) the composition is skewed to basic and acidic residues.

In terms of assembly, interacts with POLR2A; via C-terminal heptapeptide repeat domain (CTD) phosphorylated at 'Ser-2' and 'Ser-5'.

The protein resides in the nucleus. Its function is as follows. Anti-terminator protein required to prevent early mRNA termination during transcription. Together with SCAF8, acts by suppressing the use of early, alternative poly(A) sites, thereby preventing the accumulation of non-functional truncated proteins. Mechanistically, associates with the phosphorylated C-terminal heptapeptide repeat domain (CTD) of the largest RNA polymerase II subunit (POLR2A), and subsequently binds nascent RNA upstream of early polyadenylation sites to prevent premature mRNA transcript cleavage and polyadenylation. Independently of SCAF8, also acts as a suppressor of transcriptional readthrough. The chain is SR-related and CTD-associated factor 4 from Homo sapiens (Human).